Consider the following 458-residue polypeptide: Tubulin beta chain (458 aa).

GTP-binding residues include glutamine 11, glutamate 69, serine 138, glycine 142, threonine 143, glycine 144, asparagine 204, and asparagine 226. Glutamate 69 lines the Mg(2+) pocket. Positions 426–458 (EAATVEGEEEEDEYAEGGVVNGDQSYDEPYQAA) are disordered. Over residues 431–440 (EGEEEEDEYA) the composition is skewed to acidic residues.

Belongs to the tubulin family. Dimer of alpha and beta chains. A typical microtubule is a hollow water-filled tube with an outer diameter of 25 nm and an inner diameter of 15 nM. Alpha-beta heterodimers associate head-to-tail to form protofilaments running lengthwise along the microtubule wall with the beta-tubulin subunit facing the microtubule plus end conferring a structural polarity. Microtubules usually have 13 protofilaments but different protofilament numbers can be found in some organisms and specialized cells. It depends on Mg(2+) as a cofactor.

It localises to the cytoplasm. Its subcellular location is the cytoskeleton. Functionally, tubulin is the major constituent of microtubules, a cylinder consisting of laterally associated linear protofilaments composed of alpha- and beta-tubulin heterodimers. Microtubules grow by the addition of GTP-tubulin dimers to the microtubule end, where a stabilizing cap forms. Below the cap, tubulin dimers are in GDP-bound state, owing to GTPase activity of alpha-tubulin. The sequence is that of Tubulin beta chain (TUBB1) from Pyropia yezoensis (Susabi-nori).